Consider the following 507-residue polypeptide: Putative F-box/LRR-repeat protein At4g00320 (507 aa).

The 49-residue stretch at 12–60 (RDGISGLPDAMICHILSFLPTKVAASTTVLAKRWKPLLAFMPNLDFDES) folds into the F-box domain. LRR repeat units follow at residues 135–163 (RGFGSNSTFYPLPSEIFVSKTLVRLKIQF), 187–212 (YVKMDTRMLQKLLSGCHTLEELLLMN), 214–240 (IWKESSEPEPCFVSVSVRTLKILKFSR), 317–348 (ILYLTEDTLKVLGCCRETMPVFENLIHLTIRT), and 349–374 (GVHIGWKSLPHLLKNCPNLQTLVFEG).

This chain is Putative F-box/LRR-repeat protein At4g00320, found in Arabidopsis thaliana (Mouse-ear cress).